A 578-amino-acid polypeptide reads, in one-letter code: Keratin, type II cytoskeletal 1b (578 aa).

A head region spans residues 1-163 (MSHQFSSQSA…DPEIQRIKTQ (163 aa)). Arg-95 carries the post-translational modification Omega-N-methylarginine. Residues 164 to 200 (EREQIMVLNNKFASFIDKVRFLEQQNQVLQTKWELLQ) form a coil 1A region. In terms of domain architecture, IF rod spans 164–477 (EREQIMVLNN…QLLEGEESRM (314 aa)). Residues 201–219 (QVNTSTGTNNLEPLLENYI) form a linker 1 region. The coil 1B stretch occupies residues 220–311 (GDLRRQVDLL…LFLTELSQVQ (92 aa)). A linker 12 region spans residues 312–335 (THISDTNVILSMDNNRSLDLDSII). The segment at 336-474 (DAVRTQYELI…TYRQLLEGEE (139 aa)) is coil 2. The interval 475-578 (SRMSGELQSH…TNTSHRRILE (104 aa)) is tail. Arg-523 carries the post-translational modification Omega-N-methylarginine. Residues 547–556 (GSYGGSGRSG) are compositionally biased toward gly residues. The interval 547–578 (GSYGGSGRSGRGSSRVQIIQTSTNTSHRRILE) is disordered. The segment covering 562–571 (VQIIQTSTNT) has biased composition (polar residues).

Belongs to the intermediate filament family. In terms of processing, undergoes deimination of some arginine residues (citrullination). Expressed exclusively in skin.

In Homo sapiens (Human), this protein is Keratin, type II cytoskeletal 1b (KRT77).